The following is a 423-amino-acid chain: GTPase HflX (423 aa).

Residues 201–363 (IQLALVGYTN…KIEQALKGMM (163 aa)) form the Hflx-type G domain. Residues 207-214 (GYTNAGKS), 232-236 (FATLD), 254-257 (DTVG), 320-323 (NKAD), and 341-343 (SAY) each bind GTP. Residues Ser214 and Thr234 each contribute to the Mg(2+) site.

It belongs to the TRAFAC class OBG-HflX-like GTPase superfamily. HflX GTPase family. In terms of assembly, monomer. Associates with the 50S ribosomal subunit. Mg(2+) serves as cofactor.

Its subcellular location is the cytoplasm. Its function is as follows. GTPase that associates with the 50S ribosomal subunit and may have a role during protein synthesis or ribosome biogenesis. The polypeptide is GTPase HflX (Alkalihalophilus pseudofirmus (strain ATCC BAA-2126 / JCM 17055 / OF4) (Bacillus pseudofirmus)).